The primary structure comprises 312 residues: MKKKILMLVGPTAVGKTETSIALCQRLKGEIISADSMQLYRHMNIGTAKPSLEEQQGIPHHLIDIIEPDASFTVADFQSEAARLIDAITKRNKFPIVAGGTGLYINSLLYDMDFTSAVSNWNLRQKLQKDAQLYGNEYVYKKLQDIDPNAATKIHPNNVKRVIRALEVNYESGENFGDFKNDIEKNTCYEPLLIGLTRDRSELYERINYRVDQMIETGLIEEVKNLLDCGYTPELIAFKGLGYKEIIAYLEGQYDLEEAITILKRDTRRYAKRQLTWFNRYQEIQWYNLTDQSSSNIIEAILKNVEGYFNLS.

10 to 17 contacts ATP; that stretch reads GPTAVGKT. A substrate-binding site is contributed by 12–17; that stretch reads TAVGKT. The interaction with substrate tRNA stretch occupies residues 35–38; that stretch reads DSMQ.

Belongs to the IPP transferase family. As to quaternary structure, monomer. Mg(2+) serves as cofactor.

It carries out the reaction adenosine(37) in tRNA + dimethylallyl diphosphate = N(6)-dimethylallyladenosine(37) in tRNA + diphosphate. In terms of biological role, catalyzes the transfer of a dimethylallyl group onto the adenine at position 37 in tRNAs that read codons beginning with uridine, leading to the formation of N6-(dimethylallyl)adenosine (i(6)A). This Alkaliphilus metalliredigens (strain QYMF) protein is tRNA dimethylallyltransferase.